The primary structure comprises 320 residues: Phospho-N-acetylmuramoyl-pentapeptide-transferase (320 aa).

Transmembrane regions (helical) follow at residues 7-27 (ILAI…VIPF), 50-70 (GTPT…SLIF), 77-97 (IGAP…DDFI), 113-133 (LVLQ…HLGS), 148-168 (WAYV…VNLT), 173-193 (GLAS…SIFS), 198-216 (MAIF…LRYN), 221-241 (VVFM…AIAV), 247-267 (VLVL…MLQV), and 297-317 (VVVV…AMIQ).

It belongs to the glycosyltransferase 4 family. MraY subfamily. Requires Mg(2+) as cofactor.

It is found in the cell membrane. The enzyme catalyses UDP-N-acetyl-alpha-D-muramoyl-L-alanyl-gamma-D-glutamyl-meso-2,6-diaminopimeloyl-D-alanyl-D-alanine + di-trans,octa-cis-undecaprenyl phosphate = di-trans,octa-cis-undecaprenyl diphospho-N-acetyl-alpha-D-muramoyl-L-alanyl-D-glutamyl-meso-2,6-diaminopimeloyl-D-alanyl-D-alanine + UMP. The protein operates within cell wall biogenesis; peptidoglycan biosynthesis. Its function is as follows. Catalyzes the initial step of the lipid cycle reactions in the biosynthesis of the cell wall peptidoglycan: transfers peptidoglycan precursor phospho-MurNAc-pentapeptide from UDP-MurNAc-pentapeptide onto the lipid carrier undecaprenyl phosphate, yielding undecaprenyl-pyrophosphoryl-MurNAc-pentapeptide, known as lipid I. The protein is Phospho-N-acetylmuramoyl-pentapeptide-transferase of Caldicellulosiruptor bescii (strain ATCC BAA-1888 / DSM 6725 / KCTC 15123 / Z-1320) (Anaerocellum thermophilum).